The chain runs to 250 residues: Oil body-associated protein 2B (250 aa).

Residues 1 to 29 (MSSSDQNPAATPASSGPAEPSPPGRPTAV) form a disordered region. Over residues 8–18 (PAATPASSGPA) the composition is skewed to low complexity.

The protein belongs to the OBAP family.

The chain is Oil body-associated protein 2B from Zea mays (Maize).